Here is a 203-residue protein sequence, read N- to C-terminus: Non-histone protein 10 (203 aa).

At Ser-2 the chain carries N-acetylserine. 2 disordered regions span residues 78-97 (KSKT…PKRP) and 161-203 (ISNI…VSSN). A DNA-binding region (HMG box) is located at residues 94-158 (PKRPTNAYLL…RYQMEMEIYN (65 aa)).

Component of the chromatin-remodeling INO80 complex, at least composed of ARP4, ARP5, ARP8, RVB1, RVB2, TAF14, NHP10, IES1, IES3, IES4, IES6, ACT1, IES2, IES5 and INO80.

The protein resides in the nucleus. Probably involved in transcription regulation via its interaction with the INO80 complex, a chromatin remodeling complex. This chain is Non-histone protein 10 (NHP10), found in Saccharomyces cerevisiae (strain ATCC 204508 / S288c) (Baker's yeast).